The primary structure comprises 1062 residues: 3-hydroxy-3-methylglutaryl-coenzyme A reductase 2 (1062 aa).

The Cytoplasmic segment spans residues 1–34 (MAPTNTKDSDTPGWLHRHGTSVLGSVARQACKQP). A helical transmembrane segment spans residues 35-55 (IYTLVITALLATMTYTSLLEG). At 56–230 (SLYNANLTRL…SFVGLIKHAQ (175 aa)) the chain is on the lumenal side. Asn61 is a glycosylation site (N-linked (GlcNAc...) asparagine). Residues 231-251 (IIDIIIMLLAYLAMHLTFLSL) form a helical membrane-spanning segment. Residues 233 to 403 (DIIIMLLAYL…FTFYISVLCV (171 aa)) enclose the SSD domain. At 252 to 261 (FMSMRQLGSR) the chain is on the cytoplasmic side. The chain crosses the membrane as a helical span at residues 262 to 282 (FWLAYSVLLSGFFSLFFGLKV). At 283 to 287 (TTSSG) the chain is on the lumenal side. A helical transmembrane segment spans residues 288 to 308 (VSTSMITLSECLPILVIIVGF). Residues 309-355 (EKPIRLTRAVLRAATESYLPAKPMARRSTPEAIEVAIMREGWRIVRD) are Cytoplasmic-facing. The helical transmembrane segment at 356 to 375 (YAIEIAILAAGATSRVQGAL) threads the bilayer. The Lumenal segment spans residues 376–377 (PQ). Residues 378-398 (FCFLAAWILLFDSLLLFTFYI) form a helical membrane-spanning segment. Over 399-450 (SVLCVKLEITRIRKHVEPRRALEDDDISTGNQDFDSRVFGCKVKAANISRFK) the chain is Cytoplasmic. Residues 451-471 (FLMVGGFVLFNVLQLSSLTYG) traverse the membrane as a helical segment. Residues 472 to 564 (NVRVSDWMPY…GCVLAWLEDP (93 aa)) lie on the Lumenal side of the membrane. Residue Asn484 is glycosylated (N-linked (GlcNAc...) asparagine). Residues 565–585 (VISKWVIAALFLSLVLNSYLM) traverse the membrane as a helical segment. Residues 586–1062 (KAARWNLRQS…NRSKVAAKTG (477 aa)) are Cytoplasmic-facing. The active-site Charge relay system is Glu744. 750-756 (SASRGCK) contributes to the CoA binding site. NADP(+)-binding positions include 811–813 (SRF) and 838–846 (DAMGMNMIS). Lys877 acts as the Charge relay system in catalysis. 906–908 (VLK) serves as a coordination point for CoA. Asp953 serves as the catalytic Charge relay system. 1048–1049 (AH) provides a ligand contact to CoA. The active-site Proton donor is His1049. 1053–1054 (NR) serves as a coordination point for NADP(+).

Belongs to the HMG-CoA reductase family.

Its subcellular location is the endoplasmic reticulum membrane. It carries out the reaction (R)-mevalonate + 2 NADP(+) + CoA = (3S)-3-hydroxy-3-methylglutaryl-CoA + 2 NADPH + 2 H(+). It participates in metabolic intermediate biosynthesis; (R)-mevalonate biosynthesis; (R)-mevalonate from acetyl-CoA: step 3/3. HMG-CoA reductase; part of the first module of ergosterol biosynthesis pathway that includes the early steps of the pathway, conserved across all eukaryotes, and which results in the formation of mevalonate from acetyl-coenzyme A (acetyl-CoA). Hmg1 and hmg2 catalyze the reduction of hydroxymethylglutaryl-CoA (HMG-CoA) to mevalonate. The first module starts with the action of the cytosolic acetyl-CoA acetyltransferase erg10B that catalyzes the formation of acetoacetyl-CoA. The hydroxymethylglutaryl-CoA synthases erg13A and erg13B then condense acetyl-CoA with acetoacetyl-CoA to form HMG-CoA. The rate-limiting step of the early module is the reduction to mevalonate by the 3-hydroxy-3-methylglutaryl-coenzyme A (HMG-CoA) reductases hmg1 and hmg2. Mevalonate is also a precursor for the extracellular siderophore triacetylfusarinine C (TAFC). In Aspergillus fumigatus (strain ATCC MYA-4609 / CBS 101355 / FGSC A1100 / Af293) (Neosartorya fumigata), this protein is 3-hydroxy-3-methylglutaryl-coenzyme A reductase 2.